We begin with the raw amino-acid sequence, 152 residues long: Acidic phospholipase A2 homolog taipoxin gamma chain (152 aa).

Positions 1–19 (MHPAHLLVLLAVCVSLLGS) are cleaved as a signal peptide. Intrachain disulfides connect C38/C104, C42/C46, C54/C151, C56/C72, C71/C132, C78/C125, C88/C118, and C111/C123. An N-linked (GlcNAc...) asparagine glycan is attached at N97.

It belongs to the phospholipase A2 family. Group I subfamily. D49 sub-subfamily. In terms of assembly, heterotrimer of alpha, beta, and gamma chains; non-covalently linked. Contains 0.9% fucose, 2.2% mannose, 4.2% N-acetyl-D-glucosamine, 3.5% galactose, and 3.8% N-acetyl-neuraminic acid (sialic acid). As to expression, expressed by the venom gland.

It localises to the secreted. Heterotrimer: Snake venom phospholipase A2 (PLA2) heterotrimer that acts as a potent presynaptic neurotoxin by blocking synaptic transmission and synaptic vesicle recycling. May act by binding in a calcium-dependent fashion to neurotonal pentraxin-1 (NPTX1) and neurotonal pentraxin-2 (NPTX2), but not to neuronal pentraxin receptor (NPTXR). Also binds to taipoxin-associated calcium binding protein 49 (RCN2), a protein localized in the lumen of endoplasmic reticulum. In terms of biological role, monomer (gamma chain): Snake venom phospholipase A2 homolog that is neither toxic nor enzymatically active. Does not bind calcium. The sequence is that of Acidic phospholipase A2 homolog taipoxin gamma chain from Oxyuranus scutellatus scutellatus (Australian taipan).